The chain runs to 165 residues: Dihydrofolate reductase (165 aa).

The DHFR domain maps to 3-165 (VVGLIWAQST…RYRLHSYHRS (163 aa)). 7-9 (IWA) contributes to the substrate binding site. NADP(+)-binding positions include 8–9 (WA) and 16–21 (IGRDGG). Position 29 (Asp29) interacts with substrate. Residue 45–48 (GRRT) participates in NADP(+) binding. Position 62 (Arg62) interacts with substrate. NADP(+) contacts are provided by residues 67–70 (LSRQ) and 100–105 (IGGEQI). Thr119 is a binding site for substrate.

It belongs to the dihydrofolate reductase family.

The catalysed reaction is (6S)-5,6,7,8-tetrahydrofolate + NADP(+) = 7,8-dihydrofolate + NADPH + H(+). It functions in the pathway cofactor biosynthesis; tetrahydrofolate biosynthesis; 5,6,7,8-tetrahydrofolate from 7,8-dihydrofolate: step 1/1. Its function is as follows. Key enzyme in folate metabolism. Catalyzes an essential reaction for de novo glycine and purine synthesis, and for DNA precursor synthesis. This chain is Dihydrofolate reductase (folA), found in Mycobacterium leprae (strain TN).